The sequence spans 183 residues: Ribosome-recycling factor (183 aa).

This sequence belongs to the RRF family.

Its subcellular location is the cytoplasm. Responsible for the release of ribosomes from messenger RNA at the termination of protein biosynthesis. May increase the efficiency of translation by recycling ribosomes from one round of translation to another. This Mycoplasmoides gallisepticum (strain R(low / passage 15 / clone 2)) (Mycoplasma gallisepticum) protein is Ribosome-recycling factor.